The primary structure comprises 489 residues: Virion host shutoff protein (489 aa).

Disordered regions lie at residues 110–135, 142–161, 285–319, and 332–364; these read EEAS…AFSN, SLAS…PSAA, RSQT…ETRV, and GYED…LTPP. Polar residues predominate over residues 124–134; that stretch reads ITDSRPSSAFS.

It belongs to the herpesviridae VHS protein family. As to quaternary structure, interacts with human EIF4H, EIF4A1 and EIF4A2; interaction with eIF4AI and EIF4A2 presumably allows Vhs protein to associate with the eIF4F cap-binding complex.

Its subcellular location is the virion. In terms of biological role, minor structural protein that acts as an endoribonuclease during lytic infection. Degrades host mRNAs in the cytoplasm by cutting them at preferred sites, including some in regions of translation initiation. Together with inhibition of host splicing by ICP27, contributes to an overall decrease in host protein synthesis. Also, after the onset of viral transcription, accelerates the turnover of viral mRNA, thereby facilitating the sequential expression of different classes of viral genes. Binds translation initiation factors eIF4H, eIF4AI, and eIF4AII, thereby may interact directly with the translation initiation complex and thus digest specifically mRNAs. Also impedes antigen presentation by major histocompatibility complex class I and class II molecules, inhibits secretion of cytokines that would otherwise recruit lymphocytes and neutrophils cells to the site of infection and blocks the activation of dendritic cells. Plays a role in the inhibition of interferon-beta activation by the cGAS/STING pathway. Mechanistically, down-regulates the expression of host cGAS/MB21D1. Also decreases the accumulation of other interferon-induced mRNAs such as host IFIT3 or CH25H to subvert their antiviral activity. The protein is Virion host shutoff protein (UL41) of Human herpesvirus 1 (strain 17) (HHV-1).